A 369-amino-acid chain; its full sequence is Cobalt-precorrin-5B C(1)-methyltransferase (369 aa).

This sequence belongs to the CbiD family.

The enzyme catalyses Co-precorrin-5B + S-adenosyl-L-methionine = Co-precorrin-6A + S-adenosyl-L-homocysteine. Its pathway is cofactor biosynthesis; adenosylcobalamin biosynthesis; cob(II)yrinate a,c-diamide from sirohydrochlorin (anaerobic route): step 6/10. Catalyzes the methylation of C-1 in cobalt-precorrin-5B to form cobalt-precorrin-6A. This chain is Cobalt-precorrin-5B C(1)-methyltransferase, found in Prosthecochloris aestuarii (strain DSM 271 / SK 413).